We begin with the raw amino-acid sequence, 260 residues long: MVDAIAKIKQDKPFIFNITNEVASNFSANGLIAIGASPAMSHTPREAKKYGEIADAVVLNLGTLTEDRGEAMLKAGMAANKNGVPVILDPIAVGGTDFRTEIIDDILKTVKLAAIRANAGEIAVLAGKLEKAKGPDSIIQENEPEIAKTVAKKYDTVVISTGKVDVVTDGKRTALCTNGHEMLQNITASGCLLSSFVGPFVSVVDDFYQAGIYAVTSYGIAAELAMEKASGPGTFIPALLDEIYFLTDEKVEKYKQVHEL.

Met40 is a binding site for substrate. ATP contacts are provided by Arg116 and Thr161. A substrate-binding site is contributed by Ala188.

This sequence belongs to the Thz kinase family. Mg(2+) is required as a cofactor.

It catalyses the reaction 5-(2-hydroxyethyl)-4-methylthiazole + ATP = 4-methyl-5-(2-phosphooxyethyl)-thiazole + ADP + H(+). Its pathway is cofactor biosynthesis; thiamine diphosphate biosynthesis; 4-methyl-5-(2-phosphoethyl)-thiazole from 5-(2-hydroxyethyl)-4-methylthiazole: step 1/1. Catalyzes the phosphorylation of the hydroxyl group of 4-methyl-5-beta-hydroxyethylthiazole (THZ). The protein is Hydroxyethylthiazole kinase 2 of Oceanobacillus iheyensis (strain DSM 14371 / CIP 107618 / JCM 11309 / KCTC 3954 / HTE831).